The primary structure comprises 914 residues: Thyroid peroxidase (914 aa).

The N-terminal stretch at 1–31 (MRTLGAMAVMLVVMGTAIFLPFLLRSRDILG) is a signal peptide. Over 32-834 (GKTMTSHVIS…TCIDSGRLPR (803 aa)) the chain is Extracellular. Asn-123 carries an N-linked (GlcNAc...) asparagine glycan. Cys-136 and Cys-152 form a disulfide bridge. Asp-232 serves as a coordination point for heme b. Residue His-233 is the Proton acceptor of the active site. Residue Asp-234 participates in Ca(2+) binding. Disulfide bonds link Cys-253-Cys-263 and Cys-257-Cys-278. N-linked (GlcNAc...) asparagine glycosylation is found at Asn-271 and Asn-299. Residues Thr-313, Phe-315, Asp-317, and Ser-319 each coordinate Ca(2+). Asn-334 is a glycosylation site (N-linked (GlcNAc...) asparagine). The heme b site is built by Glu-387 and His-482. Cystine bridges form between Cys-586–Cys-643, Cys-684–Cys-709, Cys-730–Cys-770, Cys-756–Cys-782, Cys-788–Cys-802, Cys-796–Cys-811, and Cys-813–Cys-826. Residue Asn-603 is glycosylated (N-linked (GlcNAc...) asparagine). The 56-residue stretch at 728 to 783 (DKCVFPEKVDNGNFVHCEESGKLVLVYSCFHGYKLQGQEQVTCTQNGWDSEPPVCK) folds into the Sushi domain. The EGF-like; calcium-binding domain maps to 784 to 827 (DVNECADLTHPPCHSSAKCKNTKGSFQCVCTDPYMLGEDEKTCI). A helical transmembrane segment spans residues 835 to 859 (ASWVSIALGALLIGGLASLSWTVIC). Residues 860-914 (RWTHADKKSTLLITERVTMESGFRKSQESGISPQKAEVQDAEQEPAYGSRVLLCE) lie on the Cytoplasmic side of the membrane. The interval 882 to 907 (FRKSQESGISPQKAEVQDAEQEPAYG) is disordered.

It belongs to the peroxidase family. XPO subfamily. Interacts with DUOX1, DUOX2 and CYBA. Ca(2+) serves as cofactor. It depends on heme b as a cofactor. Post-translationally, heme is covalently bound through a H(2)O(2)-dependent autocatalytic process. Heme insertion is important for the delivery of protein at the cell surface. Cleaved in its N-terminal part.

The protein resides in the membrane. It catalyses the reaction 2 iodide + H2O2 + 2 H(+) = diiodine + 2 H2O. The enzyme catalyses [thyroglobulin]-L-tyrosine + iodide + H2O2 + H(+) = [thyroglobulin]-3-iodo-L-tyrosine + 2 H2O. It carries out the reaction [thyroglobulin]-3-iodo-L-tyrosine + iodide + H2O2 + H(+) = [thyroglobulin]-3,5-diiodo-L-tyrosine + 2 H2O. The catalysed reaction is 2 [thyroglobulin]-3,5-diiodo-L-tyrosine + H2O2 = [thyroglobulin]-L-thyroxine + [thyroglobulin]-dehydroalanine + 2 H2O. It catalyses the reaction [thyroglobulin]-3-iodo-L-tyrosine + [thyroglobulin]-3,5-diiodo-L-tyrosine + H2O2 = [thyroglobulin]-3,3',5-triiodo-L-thyronine + [thyroglobulin]-dehydroalanine + 2 H2O. Its pathway is hormone biosynthesis; thyroid hormone biosynthesis. Its function is as follows. Iodination and coupling of the hormonogenic tyrosines in thyroglobulin to yield the thyroid hormones T(3) and T(4). The polypeptide is Thyroid peroxidase (Tpo) (Rattus norvegicus (Rat)).